We begin with the raw amino-acid sequence, 303 residues long: Acetaldehyde dehydrogenase (303 aa).

Catalysis depends on Cys-131, which acts as the Acyl-thioester intermediate. NAD(+) contacts are provided by residues 162–170 (SVGPGTRAN) and Asn-273.

This sequence belongs to the acetaldehyde dehydrogenase family.

The enzyme catalyses acetaldehyde + NAD(+) + CoA = acetyl-CoA + NADH + H(+). The protein is Acetaldehyde dehydrogenase of Marinomonas sp. (strain MWYL1).